Consider the following 966-residue polypeptide: Serine/threonine-protein kinase 10 (966 aa).

Phosphoserine occurs at positions 13 and 20. The 259-residue stretch at 36–294 (WEIVGELGDG…AAQLLQHPFV (259 aa)) folds into the Protein kinase domain. Residues 42–50 (LGDGAFGKV) and K65 contribute to the ATP site. D157 serves as the catalytic Proton acceptor. Residues 175-224 (DFGVSAKNLKTLQKRDSFIGTPYWMAPEVVLCETMKDAPYDYKADIWSLG) are activation segment. The residue at position 185 (T185) is a Phosphothreonine; by autocatalysis. S191 carries the post-translational modification Phosphoserine. Composition is skewed to polar residues over residues 341 to 363 (TQDS…DSST) and 371 to 392 (QEPV…TTSP). The segment at 341-497 (TQDSANVTQP…NLSTSESMDY (157 aa)) is disordered. Positions 421 to 430 (IQMDEEKQIP) are enriched in basic and acidic residues. Phosphoserine is present on residues S437, S449, S453, and S484. Over residues 438–456 (PAASKSQKANQSRPNSSAL) the composition is skewed to polar residues. The segment covering 485–497 (DCSNLSTSESMDY) has biased composition (polar residues). Phosphoserine occurs at positions 513 and 548. Residues 588-936 (LQLEQMHKRF…LNQKKREQEM (349 aa)) adopt a coiled-coil conformation. 3 disordered regions span residues 660-692 (KKEV…KKQR), 826-865 (INGA…ENQM), and 901-966 (LDES…GDAS). 2 stretches are compositionally biased toward basic and acidic residues: residues 834 to 865 (EQRE…ENQM) and 901 to 946 (LDES…EAEP). At T950 the chain carries Phosphothreonine. A compositionally biased stretch (polar residues) spans 950 to 966 (TPSKASNFFPYSSGDAS).

The protein belongs to the protein kinase superfamily. STE Ser/Thr protein kinase family. STE20 subfamily. Homodimer; homodimerization is required for activation segment autophosphorylation. In terms of processing, autophosphorylates following homodimerization, leading to activation of the protein. In terms of tissue distribution, expressed predominantly in lymphoid organs such as spleen, thymus, and bone marrow.

The protein localises to the cell membrane. The enzyme catalyses L-seryl-[protein] + ATP = O-phospho-L-seryl-[protein] + ADP + H(+). It carries out the reaction L-threonyl-[protein] + ATP = O-phospho-L-threonyl-[protein] + ADP + H(+). Its activity is regulated as follows. Inhibited by the pyrrole-indolinone inhibitor SU11274 (K00593): intercalates between the ATP-binding Lys-65 and alpha-C glutamate (Glu-81), resulting in a partial disordering of the lysine side chain. Also specifically inhibited by erlotinib. Slightly inhibited by gefitinib. Serine/threonine-protein kinase involved in regulation of lymphocyte migration. Phosphorylates MSN, and possibly PLK1. Involved in regulation of lymphocyte migration by mediating phosphorylation of ERM proteins such as MSN. Acts as a negative regulator of MAP3K1/MEKK1. May also act as a cell cycle regulator by acting as a polo kinase kinase: mediates phosphorylation of PLK1 in vitro; however such data require additional evidences in vivo. The polypeptide is Serine/threonine-protein kinase 10 (Stk10) (Mus musculus (Mouse)).